Reading from the N-terminus, the 151-residue chain is MSVKEIVSNRKAFHNYEVLETFDAGIVLTGTEIKSLRDHGGNLGDAYVTISKGEAWLLQSSIAPYRFGNINNHEERRKRKLLLHKYELQKLDSRVSQKGLTIIPLSFFFSKGFVKVRIGCCRGKKSHDKRQALIEREKNRELAAAMKRSYR.

The protein belongs to the SmpB family.

It localises to the cytoplasm. Its function is as follows. Required for rescue of stalled ribosomes mediated by trans-translation. Binds to transfer-messenger RNA (tmRNA), required for stable association of tmRNA with ribosomes. tmRNA and SmpB together mimic tRNA shape, replacing the anticodon stem-loop with SmpB. tmRNA is encoded by the ssrA gene; the 2 termini fold to resemble tRNA(Ala) and it encodes a 'tag peptide', a short internal open reading frame. During trans-translation Ala-aminoacylated tmRNA acts like a tRNA, entering the A-site of stalled ribosomes, displacing the stalled mRNA. The ribosome then switches to translate the ORF on the tmRNA; the nascent peptide is terminated with the 'tag peptide' encoded by the tmRNA and targeted for degradation. The ribosome is freed to recommence translation, which seems to be the essential function of trans-translation. The chain is SsrA-binding protein from Chlamydia muridarum (strain MoPn / Nigg).